Here is a 230-residue protein sequence, read N- to C-terminus: 7-cyano-7-deazaguanine synthase (230 aa).

Position 14–24 (14–24) interacts with ATP; sequence LSGGLDSTTTL. The Zn(2+) site is built by Cys194, Cys204, Cys207, and Cys210.

Belongs to the QueC family. Zn(2+) serves as cofactor.

The enzyme catalyses 7-carboxy-7-deazaguanine + NH4(+) + ATP = 7-cyano-7-deazaguanine + ADP + phosphate + H2O + H(+). The protein operates within purine metabolism; 7-cyano-7-deazaguanine biosynthesis. In terms of biological role, catalyzes the ATP-dependent conversion of 7-carboxy-7-deazaguanine (CDG) to 7-cyano-7-deazaguanine (preQ(0)). The sequence is that of 7-cyano-7-deazaguanine synthase from Ruthia magnifica subsp. Calyptogena magnifica.